The primary structure comprises 30 residues: Varv peptide G (30 aa).

Positions 1 to 30 form a cross-link, cyclopeptide (Gly-Asn); it reads GVPVCGETCFGGTCNTPGCSCDPWPVCSRN. Intrachain disulfides connect C5–C19, C9–C21, and C14–C27.

Post-translationally, this is a cyclic peptide.

Functionally, probably participates in a plant defense mechanism. The protein is Varv peptide G of Viola arvensis (European field pansy).